A 341-amino-acid polypeptide reads, in one-letter code: Protein pelota homolog (341 aa).

This sequence belongs to the eukaryotic release factor 1 family. Pelota subfamily. As to quaternary structure, monomer. It depends on a divalent metal cation as a cofactor.

It localises to the cytoplasm. Functionally, may function in recognizing stalled ribosomes, interact with stem-loop structures in stalled mRNA molecules, and effect endonucleolytic cleavage of the mRNA. May play a role in the release non-functional ribosomes and degradation of damaged mRNAs. Has endoribonuclease activity. This Metallosphaera sedula (strain ATCC 51363 / DSM 5348 / JCM 9185 / NBRC 15509 / TH2) protein is Protein pelota homolog.